Here is a 404-residue protein sequence, read N- to C-terminus: Argininosuccinate synthase (404 aa).

Residue 9 to 17 (AYSGGLDTS) participates in ATP binding. An L-citrulline-binding site is contributed by Tyr86. Gly116 serves as a coordination point for ATP. L-aspartate contacts are provided by Thr118, Asn122, and Asp123. L-citrulline is bound at residue Asn122. Residues Arg126, Ser174, Ser183, Glu259, and Tyr271 each coordinate L-citrulline.

Belongs to the argininosuccinate synthase family. Type 1 subfamily. As to quaternary structure, homotetramer.

The protein localises to the cytoplasm. It catalyses the reaction L-citrulline + L-aspartate + ATP = 2-(N(omega)-L-arginino)succinate + AMP + diphosphate + H(+). It participates in amino-acid biosynthesis; L-arginine biosynthesis; L-arginine from L-ornithine and carbamoyl phosphate: step 2/3. This is Argininosuccinate synthase from Listeria innocua serovar 6a (strain ATCC BAA-680 / CLIP 11262).